The sequence spans 882 residues: Leucine--tRNA ligase (882 aa).

Positions 43–53 match the 'HIGH' region motif; it reads PYPSGNLHMGH. The 'KMSKS' region motif lies at 632–636; it reads TMSKS. Position 635 (Lys-635) interacts with ATP.

Belongs to the class-I aminoacyl-tRNA synthetase family.

It localises to the cytoplasm. The catalysed reaction is tRNA(Leu) + L-leucine + ATP = L-leucyl-tRNA(Leu) + AMP + diphosphate. This Synechococcus sp. (strain JA-2-3B'a(2-13)) (Cyanobacteria bacterium Yellowstone B-Prime) protein is Leucine--tRNA ligase.